A 203-amino-acid polypeptide reads, in one-letter code: Thymidylate kinase (203 aa).

10-17 is an ATP binding site; that stretch reads GVEGSGKT.

It belongs to the thymidylate kinase family.

It catalyses the reaction dTMP + ATP = dTDP + ADP. Functionally, phosphorylation of dTMP to form dTDP in both de novo and salvage pathways of dTTP synthesis. The protein is Thymidylate kinase of Carboxydothermus hydrogenoformans (strain ATCC BAA-161 / DSM 6008 / Z-2901).